A 199-amino-acid polypeptide reads, in one-letter code: Cytochrome c oxidase subunit 2 (199 aa).

A helical membrane pass occupies residues 1–13 (AICSLVLYLLTLM). Residues 14 to 26 (LMEKLSSNSVDAQ) lie on the Mitochondrial matrix side of the membrane. A helical transmembrane segment spans residues 27-54 (EVELVWTILPAIVLILLALPSLQILYMM). Residues 55 to 199 (DEIDEPDLTL…SSLLSTSSSL (145 aa)) are Mitochondrial intermembrane-facing. Cu cation-binding residues include histidine 128, cysteine 163, glutamate 165, cysteine 167, histidine 171, and methionine 174. Position 165 (glutamate 165) interacts with Mg(2+).

The protein belongs to the cytochrome c oxidase subunit 2 family. In terms of assembly, component of the cytochrome c oxidase (complex IV, CIV), a multisubunit enzyme composed of 14 subunits. The complex is composed of a catalytic core of 3 subunits MT-CO1, MT-CO2 and MT-CO3, encoded in the mitochondrial DNA, and 11 supernumerary subunits COX4I, COX5A, COX5B, COX6A, COX6B, COX6C, COX7A, COX7B, COX7C, COX8 and NDUFA4, which are encoded in the nuclear genome. The complex exists as a monomer or a dimer and forms supercomplexes (SCs) in the inner mitochondrial membrane with NADH-ubiquinone oxidoreductase (complex I, CI) and ubiquinol-cytochrome c oxidoreductase (cytochrome b-c1 complex, complex III, CIII), resulting in different assemblies (supercomplex SCI(1)III(2)IV(1) and megacomplex MCI(2)III(2)IV(2)). Found in a complex with TMEM177, COA6, COX18, COX20, SCO1 and SCO2. Interacts with TMEM177 in a COX20-dependent manner. Interacts with COX20. Interacts with COX16. It depends on Cu cation as a cofactor.

It is found in the mitochondrion inner membrane. It carries out the reaction 4 Fe(II)-[cytochrome c] + O2 + 8 H(+)(in) = 4 Fe(III)-[cytochrome c] + 2 H2O + 4 H(+)(out). Functionally, component of the cytochrome c oxidase, the last enzyme in the mitochondrial electron transport chain which drives oxidative phosphorylation. The respiratory chain contains 3 multisubunit complexes succinate dehydrogenase (complex II, CII), ubiquinol-cytochrome c oxidoreductase (cytochrome b-c1 complex, complex III, CIII) and cytochrome c oxidase (complex IV, CIV), that cooperate to transfer electrons derived from NADH and succinate to molecular oxygen, creating an electrochemical gradient over the inner membrane that drives transmembrane transport and the ATP synthase. Cytochrome c oxidase is the component of the respiratory chain that catalyzes the reduction of oxygen to water. Electrons originating from reduced cytochrome c in the intermembrane space (IMS) are transferred via the dinuclear copper A center (CU(A)) of subunit 2 and heme A of subunit 1 to the active site in subunit 1, a binuclear center (BNC) formed by heme A3 and copper B (CU(B)). The BNC reduces molecular oxygen to 2 water molecules using 4 electrons from cytochrome c in the IMS and 4 protons from the mitochondrial matrix. The sequence is that of Cytochrome c oxidase subunit 2 (MT-CO2) from Apteryx australis (Southern brown kiwi).